Reading from the N-terminus, the 320-residue chain is MRSAQVYRWQIPMDAGVVLRDRRLKTRDGLYVCLRDGEREGWGEISPLPGFSQETWEEAQTALLTWVNDWLQGSEGLPEMPSVAFGASCALAELTGVLPEAADYRAAPLCTGDPDDLVLRLADMPGEKIAKVKVGLYEAVRDGMVVNLLLEAIPDLHLRLDANRAWTPLKAQQFAKYVNPDYRARIAFLEEPCKTRDDSRAFARETGIAIAWDESLREADFTFEAEEGVRAVVIKPTLTGSLDKVREQVAAAHALGLTAVISSSIESSLGLTQLARIAAWLTPGTLPGLDTLHLMQAQQVRPWPGNALPCLKRDELERLL.

Catalysis depends on K133, which acts as the Proton donor. Mg(2+) is bound by residues D161, E190, and D213. The active-site Proton acceptor is K235.

This sequence belongs to the mandelate racemase/muconate lactonizing enzyme family. MenC type 1 subfamily. Requires a divalent metal cation as cofactor.

The enzyme catalyses (1R,6R)-6-hydroxy-2-succinyl-cyclohexa-2,4-diene-1-carboxylate = 2-succinylbenzoate + H2O. Its pathway is quinol/quinone metabolism; 1,4-dihydroxy-2-naphthoate biosynthesis; 1,4-dihydroxy-2-naphthoate from chorismate: step 4/7. It participates in quinol/quinone metabolism; menaquinone biosynthesis. In terms of biological role, converts 2-succinyl-6-hydroxy-2,4-cyclohexadiene-1-carboxylate (SHCHC) to 2-succinylbenzoate (OSB). The sequence is that of o-succinylbenzoate synthase from Salmonella typhi.